We begin with the raw amino-acid sequence, 235 residues long: 5'-methylthioadenosine/S-adenosylhomocysteine nucleosidase (235 aa).

The Proton acceptor role is filled by E12. Substrate is bound by residues G78, M153, and 174–175; that span reads ME. The active-site Proton donor is D198.

The protein belongs to the PNP/UDP phosphorylase family. MtnN subfamily.

It carries out the reaction S-adenosyl-L-homocysteine + H2O = S-(5-deoxy-D-ribos-5-yl)-L-homocysteine + adenine. The catalysed reaction is S-methyl-5'-thioadenosine + H2O = 5-(methylsulfanyl)-D-ribose + adenine. The enzyme catalyses 5'-deoxyadenosine + H2O = 5-deoxy-D-ribose + adenine. It functions in the pathway amino-acid biosynthesis; L-methionine biosynthesis via salvage pathway; S-methyl-5-thio-alpha-D-ribose 1-phosphate from S-methyl-5'-thioadenosine (hydrolase route): step 1/2. In terms of biological role, catalyzes the irreversible cleavage of the glycosidic bond in both 5'-methylthioadenosine (MTA) and S-adenosylhomocysteine (SAH/AdoHcy) to adenine and the corresponding thioribose, 5'-methylthioribose and S-ribosylhomocysteine, respectively. Also cleaves 5'-deoxyadenosine, a toxic by-product of radical S-adenosylmethionine (SAM) enzymes, into 5-deoxyribose and adenine. This is 5'-methylthioadenosine/S-adenosylhomocysteine nucleosidase from Pseudoalteromonas translucida (strain TAC 125).